A 530-amino-acid polypeptide reads, in one-letter code: MLHLLALFLHCLPLASGDYDICKSWVTTDEGPTWEFYACQPKVMRLKDYVKVKVEPSGITCGDPPERFCSHENPYLCSNECDASNPDLAHPPRLMFDKEEEGLATYWQSITWSRYPSPLEANITLSWNKTVELTDDVVMTFEYGRPTVMVLEKSLDNGRTWQPYQFYAEDCMEAFGMSARRARDMSSSSAHRVLCTEEYSRWAGSKKEKHVRFEVRDRFAIFAGPDLRNMDNLYTRLESAKGLKEFFTLTDLRMRLLRPALGGTYVQRENLYKYFYAISNIEVIGRCKCNLHANLCSMREGSLQCECEHNTTGPDCGKCKKNFRTRSWRAGSYLPLPHGSPNACATAGSFGNCECYGHSNRCSYIDFLNVVTCVSCKHNTRGQHCQHCRLGYYRNGSAELDDENVCIECNCNQIGSVHDRCNETGFCECREGAAGPKCDDCLPTHYWRQGCYPNVCDDDQLLCQNGGTCLQNQRCACPRGYTGVRCEQPRCDPADDDGGLDCDRAPGAAPRPATLLGCLLLLGLAARLGR.

A signal peptide spans 1–17; it reads MLHLLALFLHCLPLASG. 3 disulfides stabilise this stretch: Cys22/Cys39, Cys61/Cys81, and Cys69/Cys77. Residues 35 to 286 form the Laminin N-terminal domain; sequence EFYACQPKVM…AISNIEVIGR (252 aa). The segment at 69 to 88 is NGL discriminant loop I; that stretch reads CSHENPYLCSNECDASNPDL. Asn122 and Asn128 each carry an N-linked (GlcNAc...) asparagine glycan. Cys171 and Cys195 are disulfide-bonded. The NGL discriminant loop II stretch occupies residues 201–203; it reads RWA. The NGL discriminant loop III stretch occupies residues 264 to 267; the sequence is TYVQ. 15 cysteine pairs are disulfide-bonded: Cys287–Cys296, Cys289–Cys305, Cys307–Cys316, Cys319–Cys344, Cys353–Cys362, Cys355–Cys373, Cys376–Cys385, Cys388–Cys406, Cys409–Cys421, Cys411–Cys427, Cys429–Cys438, Cys441–Cys451, Cys456–Cys469, Cys463–Cys475, and Cys477–Cys486. 3 Laminin EGF-like domains span residues 287–346, 353–408, and 409–453; these read CKCN…ACAT, CECY…VCIE, and CNCN…GCYP. Asn310 carries an N-linked (GlcNAc...) asparagine glycan. N-linked (GlcNAc...) asparagine glycosylation occurs at Asn395. N-linked (GlcNAc...) asparagine glycosylation is present at Asn422. A lipid anchor (GPI-anchor amidated glycine) is attached at Gly507. Residues 508–530 constitute a propeptide, removed in mature form; that stretch reads AAPRPATLLGCLLLLGLAARLGR.

As to quaternary structure, interacts with LRRC4. In terms of processing, N-glycosylated.

Its subcellular location is the cell membrane. In terms of biological role, involved in controlling patterning and neuronal circuit formation at the laminar, cellular, subcellular and synaptic levels. Promotes neurite outgrowth of both axons and dendrites. This chain is Netrin-G2, found in Homo sapiens (Human).